We begin with the raw amino-acid sequence, 712 residues long: 3',5'-cyclic-AMP phosphodiesterase 4C (712 aa).

Disordered regions lie at residues 1-31 (MENLGVGEGAEACSRLSRSRGRHSMTRAPKH) and 45-64 (RFYSDPDKSAGCRERDLSPR). Residues 17–31 (SRSRGRHSMTRAPKH) are compositionally biased toward basic residues. Over residues 48 to 64 (SDPDKSAGCRERDLSPR) the composition is skewed to basic and acidic residues. Ser-73 carries the post-translational modification Phosphoserine. Residues 181–200 (AKQGPVGNPSSSNQLPPAED) form a disordered region. The 330-residue stretch at 312 to 641 (VQTDQEEQLA…EWYQSKIPRS (330 aa)) folds into the PDEase domain. His-388 functions as the Proton donor in the catalytic mechanism. His-388 contributes to the 3',5'-cyclic AMP binding site. His-388 and His-392 together coordinate AMP. Zn(2+)-binding residues include His-392, His-428, Asp-429, and Asp-546. The AMP site is built by Asp-429, Asp-546, Gln-597, and Phe-600. Residue Asp-429 participates in Mg(2+) binding. Residue Asp-429 coordinates Mn(2+). 3',5'-cyclic AMP contacts are provided by Gln-597 and Phe-600. 2 disordered regions span residues 636-655 (SKIPRSPSDLTNPERDGPDR) and 664-712 (EAEE…NQRT). Ser-641 bears the Phosphoserine mark. Residues 664-678 (EAEEEDEEEEEEGEE) are compositionally biased toward acidic residues.

This sequence belongs to the cyclic nucleotide phosphodiesterase family. PDE4 subfamily. As to quaternary structure, part of a complex containing AKAP5, ADCY5, ADCY6 and PKD2. It depends on Zn(2+) as a cofactor. Mg(2+) serves as cofactor. Mn(2+) is required as a cofactor. As to expression, expressed in various tissues but not in cells of the immune system.

The protein resides in the cell projection. Its subcellular location is the cilium. It catalyses the reaction 3',5'-cyclic AMP + H2O = AMP + H(+). The protein operates within purine metabolism; 3',5'-cyclic AMP degradation; AMP from 3',5'-cyclic AMP: step 1/1. Its activity is regulated as follows. Inhibited by rolipram. Its function is as follows. Hydrolyzes the second messenger cAMP, which is a key regulator of many important physiological processes. The protein is 3',5'-cyclic-AMP phosphodiesterase 4C of Homo sapiens (Human).